The primary structure comprises 314 residues: Formimidoylglutamase (314 aa).

Positions 127, 151, 153, 155, 239, and 241 each coordinate Mn(2+).

This sequence belongs to the arginase family. The cofactor is Mn(2+).

The enzyme catalyses N-formimidoyl-L-glutamate + H2O = formamide + L-glutamate. It functions in the pathway amino-acid degradation; L-histidine degradation into L-glutamate; L-glutamate from N-formimidoyl-L-glutamate (hydrolase route): step 1/1. In terms of biological role, catalyzes the conversion of N-formimidoyl-L-glutamate to L-glutamate and formamide. The chain is Formimidoylglutamase from Corynebacterium efficiens (strain DSM 44549 / YS-314 / AJ 12310 / JCM 11189 / NBRC 100395).